The primary structure comprises 280 residues: Large ribosomal subunit protein uL2 (280 aa).

2 disordered regions span residues 1 to 59 (MAIR…GGHK) and 223 to 280 (GVVM…NKKR). Basic residues-rich tracts occupy residues 45–59 (VHGH…GGHK) and 269–280 (VRRRRSNKNKKR).

Belongs to the universal ribosomal protein uL2 family. As to quaternary structure, part of the 50S ribosomal subunit. Forms a bridge to the 30S subunit in the 70S ribosome.

In terms of biological role, one of the primary rRNA binding proteins. Required for association of the 30S and 50S subunits to form the 70S ribosome, for tRNA binding and peptide bond formation. It has been suggested to have peptidyltransferase activity; this is somewhat controversial. Makes several contacts with the 16S rRNA in the 70S ribosome. The sequence is that of Large ribosomal subunit protein uL2 from Corynebacterium jeikeium (strain K411).